The primary structure comprises 149 residues: Ribosome-binding factor A (149 aa).

The protein belongs to the RbfA family. In terms of assembly, monomer. Binds 30S ribosomal subunits, but not 50S ribosomal subunits or 70S ribosomes.

It localises to the cytoplasm. One of several proteins that assist in the late maturation steps of the functional core of the 30S ribosomal subunit. Associates with free 30S ribosomal subunits (but not with 30S subunits that are part of 70S ribosomes or polysomes). Required for efficient processing of 16S rRNA. May interact with the 5'-terminal helix region of 16S rRNA. The protein is Ribosome-binding factor A of Caulobacter vibrioides (strain ATCC 19089 / CIP 103742 / CB 15) (Caulobacter crescentus).